The primary structure comprises 130 residues: MAEKKILKKKVVKKSIAKGIVYISATFNNTMVTVTDEMGNAIAWSSAGALNFKGSKKSTPYAAQQAVEDALNKAKEHGIKEVGIKVQGPGSGRETAVKSIGAIEGIKVTFFKDITPLAHNGCRPPKRRRV.

Belongs to the universal ribosomal protein uS11 family. Part of the 30S ribosomal subunit. Interacts with proteins S7 and S18. Binds to IF-3.

In terms of biological role, located on the platform of the 30S subunit, it bridges several disparate RNA helices of the 16S rRNA. Forms part of the Shine-Dalgarno cleft in the 70S ribosome. The protein is Small ribosomal subunit protein uS11 of Campylobacter hominis (strain ATCC BAA-381 / DSM 21671 / CCUG 45161 / LMG 19568 / NCTC 13146 / CH001A).